Here is a 459-residue protein sequence, read N- to C-terminus: Bifunctional protein GlmU (459 aa).

The segment at 1-229 is pyrophosphorylase; that stretch reads MSNFAIILAA…FDESLGVNDR (229 aa). UDP-N-acetyl-alpha-D-glucosamine-binding positions include 8–11, lysine 22, glutamine 72, and 77–78; these read LAAG and GT. Residue aspartate 102 coordinates Mg(2+). Positions 139, 154, 169, and 227 each coordinate UDP-N-acetyl-alpha-D-glucosamine. Asparagine 227 contacts Mg(2+). A linker region spans residues 230–250; the sequence is VALATAESVMRRRINHKHMVN. Residues 251-459 form an N-acetyltransferase region; sequence GVSFVNPEAT…TRLPHHPKNQ (209 aa). Residues arginine 332 and lysine 350 each coordinate UDP-N-acetyl-alpha-D-glucosamine. Catalysis depends on histidine 362, which acts as the Proton acceptor. UDP-N-acetyl-alpha-D-glucosamine-binding residues include tyrosine 365 and asparagine 376. Residues alanine 379, 385–386, serine 404, alanine 422, and arginine 439 each bind acetyl-CoA; that span reads NY.

The protein in the N-terminal section; belongs to the N-acetylglucosamine-1-phosphate uridyltransferase family. This sequence in the C-terminal section; belongs to the transferase hexapeptide repeat family. Homotrimer. Mg(2+) is required as a cofactor.

The protein localises to the cytoplasm. The enzyme catalyses alpha-D-glucosamine 1-phosphate + acetyl-CoA = N-acetyl-alpha-D-glucosamine 1-phosphate + CoA + H(+). It carries out the reaction N-acetyl-alpha-D-glucosamine 1-phosphate + UTP + H(+) = UDP-N-acetyl-alpha-D-glucosamine + diphosphate. It participates in nucleotide-sugar biosynthesis; UDP-N-acetyl-alpha-D-glucosamine biosynthesis; N-acetyl-alpha-D-glucosamine 1-phosphate from alpha-D-glucosamine 6-phosphate (route II): step 2/2. Its pathway is nucleotide-sugar biosynthesis; UDP-N-acetyl-alpha-D-glucosamine biosynthesis; UDP-N-acetyl-alpha-D-glucosamine from N-acetyl-alpha-D-glucosamine 1-phosphate: step 1/1. It functions in the pathway bacterial outer membrane biogenesis; LPS lipid A biosynthesis. Functionally, catalyzes the last two sequential reactions in the de novo biosynthetic pathway for UDP-N-acetylglucosamine (UDP-GlcNAc). The C-terminal domain catalyzes the transfer of acetyl group from acetyl coenzyme A to glucosamine-1-phosphate (GlcN-1-P) to produce N-acetylglucosamine-1-phosphate (GlcNAc-1-P), which is converted into UDP-GlcNAc by the transfer of uridine 5-monophosphate (from uridine 5-triphosphate), a reaction catalyzed by the N-terminal domain. This is Bifunctional protein GlmU from Streptococcus pneumoniae (strain Taiwan19F-14).